A 530-amino-acid polypeptide reads, in one-letter code: UDP-glucuronosyltransferase 2B14 (530 aa).

The N-terminal stretch at 1–24 (MSVKHVSVLLLLLQLSCCFRTGSC) is a signal peptide. Residues asparagine 134 and asparagine 316 are each glycosylated (N-linked (GlcNAc...) asparagine). The chain crosses the membrane as a helical span at residues 494–510 (VVGFLVSCAAFLIFLVI).

It belongs to the UDP-glycosyltransferase family.

The protein resides in the microsome membrane. The protein localises to the endoplasmic reticulum membrane. It catalyses the reaction glucuronate acceptor + UDP-alpha-D-glucuronate = acceptor beta-D-glucuronoside + UDP + H(+). Its function is as follows. UDPGT is of major importance in the conjugation and subsequent elimination of potentially toxic xenobiotics and endogenous compounds. This is UDP-glucuronosyltransferase 2B14 (UGT2B14) from Oryctolagus cuniculus (Rabbit).